The chain runs to 145 residues: AN1-type zinc finger protein 2A (145 aa).

2 AN1-type zinc fingers span residues 4–52 (PDLG…QKDV) and 94–142 (KIFT…RPTI). 16 residues coordinate Zn(2+): Cys-10, Cys-15, Cys-25, Cys-28, Cys-33, His-36, His-42, Cys-44, Cys-100, Cys-105, Cys-115, Cys-118, Cys-123, His-126, His-132, and Cys-134.

The protein localises to the cytoplasm. It is found in the nucleus. This Homo sapiens (Human) protein is AN1-type zinc finger protein 2A (ZFAND2A).